The following is a 205-amino-acid chain: ATP phosphoribosyltransferase (205 aa).

This sequence belongs to the ATP phosphoribosyltransferase family. Short subfamily.

The protein localises to the cytoplasm. It catalyses the reaction 1-(5-phospho-beta-D-ribosyl)-ATP + diphosphate = 5-phospho-alpha-D-ribose 1-diphosphate + ATP. It participates in amino-acid biosynthesis; L-histidine biosynthesis; L-histidine from 5-phospho-alpha-D-ribose 1-diphosphate: step 1/9. Catalyzes the condensation of ATP and 5-phosphoribose 1-diphosphate to form N'-(5'-phosphoribosyl)-ATP (PR-ATP). Has a crucial role in the pathway because the rate of histidine biosynthesis seems to be controlled primarily by regulation of HisG enzymatic activity. This Thermococcus gammatolerans (strain DSM 15229 / JCM 11827 / EJ3) protein is ATP phosphoribosyltransferase.